Reading from the N-terminus, the 510-residue chain is Lysine--tRNA ligase (510 aa).

Glu-420 and Glu-427 together coordinate Mg(2+).

It belongs to the class-II aminoacyl-tRNA synthetase family. In terms of assembly, homodimer. The cofactor is Mg(2+).

It is found in the cytoplasm. It carries out the reaction tRNA(Lys) + L-lysine + ATP = L-lysyl-tRNA(Lys) + AMP + diphosphate. The sequence is that of Lysine--tRNA ligase (lysS) from Vibrio cholerae serotype O1 (strain ATCC 39315 / El Tor Inaba N16961).